We begin with the raw amino-acid sequence, 301 residues long: Tyrosine recombinase XerD (301 aa).

The 84-residue stretch at 6-89 (PLHQQLIEQF…ALKVFFHFLK (84 aa)) folds into the Core-binding (CB) domain. Residues 108-293 (RLPSILSTEE…ASESIIEKFH (186 aa)) form the Tyr recombinase domain. Active-site residues include arginine 152, lysine 174, histidine 245, arginine 248, and histidine 271. Tyrosine 280 functions as the O-(3'-phospho-DNA)-tyrosine intermediate in the catalytic mechanism.

The protein belongs to the 'phage' integrase family. XerD subfamily. In terms of assembly, forms a cyclic heterotetrameric complex composed of two molecules of XerC and two molecules of XerD.

Its subcellular location is the cytoplasm. In terms of biological role, site-specific tyrosine recombinase, which acts by catalyzing the cutting and rejoining of the recombining DNA molecules. The XerC-XerD complex is essential to convert dimers of the bacterial chromosome into monomers to permit their segregation at cell division. It also contributes to the segregational stability of plasmids. This chain is Tyrosine recombinase XerD, found in Chlamydia muridarum (strain MoPn / Nigg).